Reading from the N-terminus, the 100-residue chain is Urease subunit gamma (100 aa).

This sequence belongs to the urease gamma subunit family. In terms of assembly, heterotrimer of UreA (gamma), UreB (beta) and UreC (alpha) subunits. Three heterotrimers associate to form the active enzyme.

The protein resides in the cytoplasm. The enzyme catalyses urea + 2 H2O + H(+) = hydrogencarbonate + 2 NH4(+). The protein operates within nitrogen metabolism; urea degradation; CO(2) and NH(3) from urea (urease route): step 1/1. This chain is Urease subunit gamma, found in Streptomyces coelicolor (strain ATCC BAA-471 / A3(2) / M145).